A 229-amino-acid polypeptide reads, in one-letter code: Nisin biosynthesis regulatory protein NisR (229 aa).

Positions 4-117 constitute a Response regulatory domain; it reads KILIVDDDQE…QLVAKVEANI (114 aa). At D53 the chain carries 4-aspartylphosphate. A DNA-binding region (ompR/PhoB-type) is located at residues 132–229; sequence EIRRDLGPIT…VRGLGYQWHG (98 aa).

In terms of processing, phosphorylated by NisK.

Its function is as follows. Member of the two-component regulatory system NisK/NisR involved in the regulation of the biosynthesis of lantibiotic nisin. NisR may function as a regulatory protein. In Lactococcus lactis subsp. lactis (Streptococcus lactis), this protein is Nisin biosynthesis regulatory protein NisR (nisR).